A 131-amino-acid polypeptide reads, in one-letter code: Small ribosomal subunit protein uS8 (131 aa).

This sequence belongs to the universal ribosomal protein uS8 family. In terms of assembly, part of the 30S ribosomal subunit. Contacts proteins S5 and S12.

Functionally, one of the primary rRNA binding proteins, it binds directly to 16S rRNA central domain where it helps coordinate assembly of the platform of the 30S subunit. This Ralstonia nicotianae (strain ATCC BAA-1114 / GMI1000) (Ralstonia solanacearum) protein is Small ribosomal subunit protein uS8.